A 237-amino-acid chain; its full sequence is CD209 antigen-like protein D (237 aa).

Over 1–54 (MSDSMESKTQQVVIPEDEECLMSGTRYSDISSRLQTKFGIKSLAEYTKQSRNPL) the chain is Cytoplasmic. Residues 55–75 (VLQLLSFLFLAGLLLIILILV) traverse the membrane as a helical; Signal-anchor for type II membrane protein segment. At 76–237 (SKVPSSEVQN…KVSTSSCTTK (162 aa)) the chain is on the extracellular side. Cysteines 106 and 117 form a disulfide. One can recognise a C-type lectin domain in the interval 112 to 227 (FFNGSCYFFS…CDKLLFWICK (116 aa)). N-linked (GlcNAc...) asparagine glycans are attached at residues N114 and N129. 2 disulfide bridges follow: C134/C226 and C205/C218. 5 residues coordinate Ca(2+): E196, N198, E203, N214, and D215.

The protein resides in the membrane. Its function is as follows. Probable pathogen-recognition receptor. May mediate the endocytosis of pathogens which are subsequently degraded in lysosomal compartments. May recognize in a calcium-dependent manner high mannose N-linked oligosaccharides in a variety of pathogen antigens. The chain is CD209 antigen-like protein D (Cd209d) from Mus musculus (Mouse).